The primary structure comprises 490 residues: Probable cytosol aminopeptidase (490 aa).

The Mn(2+) site is built by Lys256 and Asp261. The active site involves Lys268. Mn(2+)-binding residues include Asp280, Asp340, and Glu342. The active site involves Arg344.

The protein belongs to the peptidase M17 family. Requires Mn(2+) as cofactor.

Its subcellular location is the cytoplasm. The enzyme catalyses Release of an N-terminal amino acid, Xaa-|-Yaa-, in which Xaa is preferably Leu, but may be other amino acids including Pro although not Arg or Lys, and Yaa may be Pro. Amino acid amides and methyl esters are also readily hydrolyzed, but rates on arylamides are exceedingly low.. The catalysed reaction is Release of an N-terminal amino acid, preferentially leucine, but not glutamic or aspartic acids.. In terms of biological role, presumably involved in the processing and regular turnover of intracellular proteins. Catalyzes the removal of unsubstituted N-terminal amino acids from various peptides. This chain is Probable cytosol aminopeptidase, found in Prochlorococcus marinus (strain MIT 9313).